A 292-amino-acid chain; its full sequence is Protease HtpX (292 aa).

The next 2 helical transmembrane spans lie at 4–24 (IVLF…ILFL) and 32–52 (IYGL…LSLI). Residue His-139 participates in Zn(2+) binding. The active site involves Glu-140. Position 143 (His-143) interacts with Zn(2+). Helical transmembrane passes span 147 to 167 (GDMI…IFIS) and 193 to 213 (FVYF…ASII). Glu-222 serves as a coordination point for Zn(2+).

It belongs to the peptidase M48B family. Zn(2+) serves as cofactor.

It localises to the cell membrane. The sequence is that of Protease HtpX from Buchnera aphidicola subsp. Acyrthosiphon pisum (strain 5A).